The following is a 170-amino-acid chain: Capsid protein (170 aa).

A compositionally biased stretch (basic residues) spans 1 to 19 (MAQLRWGRKGVRSQRRKYS). The interval 1 to 25 (MAQLRWGRKGVRSQRRKYSRPVAYK) is disordered.

It belongs to the nanoviridae capsid protein family.

It is found in the virion. The protein is Capsid protein (DNA-S) of Subterranean clover stunt virus (strain J) (SCSV).